The primary structure comprises 370 residues: MKFIDEARIEVIAGQGGAGSASMRREKFIEFGGPDGGDGGKGGSVWATADRNINTLIDYRYAKTHTAKNGEPGRGADCYGRAGDDIELRMPVGTIISDYETGEPIADLTTHGERLCLAQGGVGGWGNIHFKSSTNRAPRQKTNGKSGERRKLKLELKVLADVGLLGMPNAGKSTLITAVSNARPKIADYPFTTLHPNLGVVRVGSERSFVIADIPGLIEGAAEGAGLGHRFLRHLQRTGVLLHLVDIAPFDANVDPVADAAAIVNELRKYDEALVEKPRWLVLNKVDIIPEEGRKKVVSDFVKKFKWKGPVFEISALTGMGCDKLCYSLQDYLDSIRRDRDDAGERAQDPRYQDQPEDKNQIKYFTCALL.

One can recognise an Obg domain in the interval 1–159 (MKFIDEARIE…RKLKLELKVL (159 aa)). The tract at residues 129-148 (HFKSSTNRAPRQKTNGKSGE) is disordered. Over residues 130–145 (FKSSTNRAPRQKTNGK) the composition is skewed to polar residues. The 175-residue stretch at 160-334 (ADVGLLGMPN…LCYSLQDYLD (175 aa)) folds into the OBG-type G domain. GTP is bound by residues 166–173 (GMPNAGKS), 191–195 (FTTLH), 213–216 (DIPG), 284–287 (NKVD), and 315–317 (SAL). Positions 173 and 193 each coordinate Mg(2+).

It belongs to the TRAFAC class OBG-HflX-like GTPase superfamily. OBG GTPase family. In terms of assembly, monomer. Mg(2+) serves as cofactor.

It localises to the cytoplasm. An essential GTPase which binds GTP, GDP and possibly (p)ppGpp with moderate affinity, with high nucleotide exchange rates and a fairly low GTP hydrolysis rate. Plays a role in control of the cell cycle, stress response, ribosome biogenesis and in those bacteria that undergo differentiation, in morphogenesis control. The protein is GTPase Obg of Polynucleobacter necessarius subsp. necessarius (strain STIR1).